The primary structure comprises 184 residues: Probable maltose O-acetyltransferase (184 aa).

Asn-84 serves as a coordination point for acetyl-CoA. The active-site Proton donor/acceptor is the His-114. Acetyl-CoA is bound by residues Gly-141, Ser-159, Thr-164–Lys-165, Arg-179, and Lys-182.

It belongs to the transferase hexapeptide repeat family. In terms of assembly, homodimer.

The catalysed reaction is D-maltose + acetyl-CoA = 1-O-acetylmaltose + CoA. Functionally, catalyzes the CoA-dependent transfer of an acetyl group to maltose and other sugars. Acetylates glucose exclusively at the C6 position and maltose at the C6 position of the non-reducing end glucosyl moiety. Is able to acetylate maltooligosaccharides. The chain is Probable maltose O-acetyltransferase (maa) from Bacillus subtilis (strain 168).